The sequence spans 124 residues: Small ribosomal subunit protein uS13 (124 aa).

A disordered region spans residues 95–124 (GLPVRGQRTKTNARTRKGPKRTIAGKKKAR).

The protein belongs to the universal ribosomal protein uS13 family. Part of the 30S ribosomal subunit. Forms a loose heterodimer with protein S19. Forms two bridges to the 50S subunit in the 70S ribosome.

Functionally, located at the top of the head of the 30S subunit, it contacts several helices of the 16S rRNA. In the 70S ribosome it contacts the 23S rRNA (bridge B1a) and protein L5 of the 50S subunit (bridge B1b), connecting the 2 subunits; these bridges are implicated in subunit movement. Contacts the tRNAs in the A and P-sites. The sequence is that of Small ribosomal subunit protein uS13 from Mycolicibacterium smegmatis (strain ATCC 700084 / mc(2)155) (Mycobacterium smegmatis).